The following is a 275-amino-acid chain: Diaminopimelate epimerase (275 aa).

The substrate site is built by Asn12, Gln45, and Asn65. Cys74 (proton donor) is an active-site residue. Residues 75-76, Asn158, Asn191, and 209-210 contribute to the substrate site; these read GN and ER. Cys218 (proton acceptor) is an active-site residue. 219–220 contacts substrate; that stretch reads GS.

This sequence belongs to the diaminopimelate epimerase family. As to quaternary structure, homodimer.

It is found in the cytoplasm. It carries out the reaction (2S,6S)-2,6-diaminopimelate = meso-2,6-diaminopimelate. The protein operates within amino-acid biosynthesis; L-lysine biosynthesis via DAP pathway; DL-2,6-diaminopimelate from LL-2,6-diaminopimelate: step 1/1. Its function is as follows. Catalyzes the stereoinversion of LL-2,6-diaminopimelate (L,L-DAP) to meso-diaminopimelate (meso-DAP), a precursor of L-lysine and an essential component of the bacterial peptidoglycan. In Shewanella amazonensis (strain ATCC BAA-1098 / SB2B), this protein is Diaminopimelate epimerase.